The following is a 570-amino-acid chain: Pantothenate kinase 2, mitochondrial (570 aa).

A mitochondrion-targeting transit peptide spans 1-31 (MRRLGPFHPRVHWAAPPSLSSGLHRLLFLRG). 2 disordered regions span residues 34-94 (IPSS…PRAR) and 127-198 (GRLG…SVSR). The short motif at 82–94 (RWRNGRGGRPRAR) is the Nucleolar localization signal element. Positions 84–93 (RNGRGGRPRA) are enriched in basic residues. Positions 155-164 (PEGRRQEPLR) are enriched in basic and acidic residues. Ser168, Ser169, and Ser189 each carry phosphoserine. Residues 168–179 (SSASVPAVGASA) are compositionally biased toward low complexity. Residues 268-275 (LELKDLTL) carry the Nuclear export signal motif. The Proton acceptor role is filled by Glu338. The acetyl-CoA site is built by Ser392, Ser395, and Arg407.

This sequence belongs to the type II pantothenate kinase family. Homodimer. Post-translationally, synthesized as a 62-kDa precursor which is proteolytically processed by the mitochondrial-processing peptidase (MPP) via a 59-kDa intermediate to yield the mature mitochondrial 48-kDa subunit. In terms of tissue distribution, expressed in the brain (at protein level). Ubiquitous. Highly expressed in the testis. Expressed in the umbilical vein endothelial cells (HUVEC).

The protein localises to the mitochondrion. It localises to the mitochondrion intermembrane space. It is found in the nucleus. Its subcellular location is the cytoplasm. The catalysed reaction is (R)-pantothenate + ATP = (R)-4'-phosphopantothenate + ADP + H(+). Its pathway is cofactor biosynthesis; coenzyme A biosynthesis; CoA from (R)-pantothenate: step 1/5. Strongly inhibited by acetyl-CoA and its thioesters. Activated by palmitoylcarnitine. Mitochondrial isoform that catalyzes the phosphorylation of pantothenate to generate 4'-phosphopantothenate in the first and rate-determining step of coenzyme A (CoA) synthesis. Required for angiogenic activity of umbilical vein of endothelial cells (HUVEC). Functionally, cytoplasmic isoform that catalyzes the phosphorylation of pantothenate to generate 4'-phosphopantothenate in the first and rate-determining step of coenzyme A (CoA) synthesis. The protein is Pantothenate kinase 2, mitochondrial (PANK2) of Homo sapiens (Human).